A 119-amino-acid chain; its full sequence is MARSVVVSLFVLLALAGLEAIQHAPKIQVYSRHPAENGKPNFLNSYVSGFHPSDIEVDLLKNGKKIEKVEHSDLSFSKDWSFYLLYYTEFTPNEKDEYACRVSHVTFQTPKTVKWDRTM.

Positions methionine 1–alanine 20 are cleaved as a signal peptide. In terms of domain architecture, Ig-like C1-type spans proline 25–lysine 114.

It belongs to the beta-2-microglobulin family. Heterodimer of an alpha chain and a beta chain. Beta-2-microglobulin is the beta-chain of major histocompatibility complex class I molecules.

Its subcellular location is the secreted. Component of the class I major histocompatibility complex (MHC). Involved in the presentation of peptide antigens to the immune system. In Brachyteles arachnoides (Southern muriqui), this protein is Beta-2-microglobulin (B2M).